The sequence spans 435 residues: Nucleoredoxin (435 aa).

The residue at position 2 (S2) is an N-acetylserine. One can recognise a Thioredoxin domain in the interval 167–314 (PKPFREVIAG…FPWHPKPVLE (148 aa)).

The protein belongs to the nucleoredoxin family. As to quaternary structure, associates with the phosphatase 2A holoenzyme. Interacts with PPP2CA; the interaction is direct. Interacts with DVL1 (via PDZ domain); the interaction is direct and regulated by oxidative stress. As to expression, widely expressed with higher expression in testis and skin.

It localises to the cytoplasm. Its subcellular location is the cytosol. The protein localises to the nucleus. It catalyses the reaction [protein]-dithiol + NAD(+) = [protein]-disulfide + NADH + H(+). The enzyme catalyses [protein]-dithiol + NADP(+) = [protein]-disulfide + NADPH + H(+). In terms of biological role, functions as a redox-dependent negative regulator of the Wnt signaling pathway, possibly by preventing ubiquitination of DVL3 by the BCR(KLHL12) complex. May also function as a transcriptional regulator act as a regulator of protein phosphatase 2A (PP2A). This is Nucleoredoxin (Nxn) from Mus musculus (Mouse).